A 245-amino-acid chain; its full sequence is MSEVSKKSGDVTVTELTEDGKLVRKIRSFVRREGRLTKGQESAMDNNWSTMGIDFAQQMLDWKEVYNREAPIVLEIGFGMGASLVEMAKHAPEKDFIGIEVHSPGVGACLMGAEETGLTNLRVMCHDAVEVFDYMIPDGSLETVQLFFPDPWHKTRHHKRRIVQPAFAEMLRKKLKIGGTFHMATDWENYAEHMVEVMNAAPGYKNTATDGDYIARPDDRPLTKFEARGHRLGHGVWDMKYTRTE.

The S-adenosyl-L-methionine site is built by Glu-75, Glu-100, Asp-127, and Asp-150. Residue Asp-150 is part of the active site. Residues Lys-154, Asp-186, and 223-226 (TKFE) each bind substrate.

It belongs to the class I-like SAM-binding methyltransferase superfamily. TrmB family.

It catalyses the reaction guanosine(46) in tRNA + S-adenosyl-L-methionine = N(7)-methylguanosine(46) in tRNA + S-adenosyl-L-homocysteine. Its pathway is tRNA modification; N(7)-methylguanine-tRNA biosynthesis. In terms of biological role, catalyzes the formation of N(7)-methylguanine at position 46 (m7G46) in tRNA. This Photobacterium profundum (strain SS9) protein is tRNA (guanine-N(7)-)-methyltransferase.